We begin with the raw amino-acid sequence, 95 residues long: Small integral membrane protein 18 (95 aa).

Residues 35 to 55 (CFVILLLFIFTVVSLVVLAFL) traverse the membrane as a helical segment.

It localises to the membrane. The chain is Small integral membrane protein 18 (SMIM18) from Homo sapiens (Human).